A 398-amino-acid polypeptide reads, in one-letter code: LIM domain-binding protein 2 (398 aa).

Disordered regions lie at residues 245 to 280 (PPAEPTRQTTTKRRKRKNSTNNASNSNAGNNATSAY) and 354 to 398 (DAAN…QASQ). Residues 263–279 (STNNASNSNAGNNATSA) show a composition bias toward low complexity. Positions 323–362 (DVMVVGEPTLMGGEFGDEDERLITRLENTQYDAANGMDDE) constitute an LIM interaction domain (LID) domain.

Belongs to the LDB family. Expressed in adult brain, lung, spleen and kidney. Isoform b is generally expressed at a higher level than isoform a.

The protein localises to the nucleus. Binds to the LIM domain of a wide variety of LIM domain-containing transcription factors. The protein is LIM domain-binding protein 2 of Xenopus laevis (African clawed frog).